Reading from the N-terminus, the 277-residue chain is Transcription factor WRKY19 (277 aa).

Positions Gln100–Ala168 form a DNA-binding region, WRKY.

Belongs to the WRKY group III family.

It is found in the nucleus. In terms of biological role, may play a role in defense responses. This chain is Transcription factor WRKY19, found in Oryza sativa subsp. japonica (Rice).